The primary structure comprises 257 residues: Asnovolin H dehydrogenase nvfC (257 aa).

The chain crosses the membrane as a helical span at residues Tyr-7–Ala-26. Ile-11 is a binding site for NADP(+). N-linked (GlcNAc...) asparagine glycans are attached at residues Asn-57, Asn-92, and Asn-110. NADP(+)-binding residues include Arg-119, Tyr-151, Lys-155, and Val-184. The active-site Proton donor is Tyr-151. The active-site Lowers pKa of active site Tyr is the Lys-155.

It belongs to the short-chain dehydrogenases/reductases (SDR) family.

It is found in the membrane. The catalysed reaction is asnovolin H + A = chermesin D + AH2. It functions in the pathway secondary metabolite biosynthesis; terpenoid biosynthesis. Short chain dehydrogenase; part of the gene cluster that mediates the biosynthesis of novofumigatonin, a heavily oxygenated meroterpenoid containing a unique orthoester moiety. The first step of the pathway is the synthesis of 3,5-dimethylorsellinic acid (DMOA) by the polyketide synthase nvfA via condensation of one acetyl-CoA starter unit with 3 malonyl-CoA units and 2 methylations. DMOA is then converted to farnesyl-DMOA by the farnesyltransferase nvfB. Epoxydation by FAD-dependent monooxygenase nvfK, followed by a protonation-initiated cyclization catalyzed by the terpene cyclase nvfL leads to the production of asnavolin H. The short chain dehydrogenase nvfC then as a 3-OH dehydrogenase of asnovolin H to yield chemesin D. There are two branches to synthesize asnovolin A from chemesin D. In one branch, chemesin D undergoes Baeyer-Villiger oxidation by nvfH, methylation by nvfJ, and enoyl reduction by the nvfM D enoylreductase that reduces the double bond between C-5'and C-6', to form respectively asnovolin I, asnovolin K, and asnovolin A. In the other branch, the methylation precedes the Baeyer-Villiger oxidation and the enoyl reduction to yield asnovolin A via the asnovolin J intermediate. Asnovolin A is further converted to fumigatonoid A by the Fe(II)/2-oxoglutarate-dependent dioxygenase nvfI that catalyzes an endoperoxidation reaction. The alpha/beta hydrolase nvfD then acts as an epimerase that converts fumigatonoid A to its C-5' epimer, which then undergoes spontaneous or nvfD-catalyzed lactonization. The following step utilizes the ketoreductase nvfG to produce fumigatonoid B. The dioxygenase nvfE further converts fumigatonoid B into fumigatonoid C. Finally the Fe(II)/2-oxoglutarate-dependent dioxygenase nvfF catalyzes two rounds of oxidation to transform fumigatonoid C into the end product, novofumigatonin A. In Aspergillus novofumigatus (strain IBT 16806), this protein is Asnovolin H dehydrogenase nvfC.